We begin with the raw amino-acid sequence, 197 residues long: dTTP/UTP pyrophosphatase (197 aa).

The active-site Proton acceptor is the Asp-70.

The protein belongs to the Maf family. YhdE subfamily. A divalent metal cation is required as a cofactor.

It is found in the cytoplasm. It catalyses the reaction dTTP + H2O = dTMP + diphosphate + H(+). The catalysed reaction is UTP + H2O = UMP + diphosphate + H(+). Functionally, nucleoside triphosphate pyrophosphatase that hydrolyzes dTTP and UTP. May have a dual role in cell division arrest and in preventing the incorporation of modified nucleotides into cellular nucleic acids. The polypeptide is dTTP/UTP pyrophosphatase (Methanosarcina mazei (strain ATCC BAA-159 / DSM 3647 / Goe1 / Go1 / JCM 11833 / OCM 88) (Methanosarcina frisia)).